Consider the following 420-residue polypeptide: UPF0053 protein HI_0107 (420 aa).

A CNNM transmembrane domain is found at 2–190 (DSIPLSTLFI…GEATPNEQHP (189 aa)). A run of 4 helical transmembrane segments spans residues 3–23 (SIPL…SAYF), 65–85 (FILI…TVIG), 92–112 (AGVA…SEIF), and 126–146 (FFSS…VWLM). CBS domains lie at 208–268 (MVPR…KNEF) and 273–333 (LIRA…FTTS).

It belongs to the UPF0053 family.

Its subcellular location is the cell membrane. The polypeptide is UPF0053 protein HI_0107 (Haemophilus influenzae (strain ATCC 51907 / DSM 11121 / KW20 / Rd)).